Here is a 323-residue protein sequence, read N- to C-terminus: Annexin A3 (323 aa).

Ala-2 bears the N-acetylalanine mark. Annexin repeat units lie at residues 18–89 (FSPS…ALVT), 90–161 (PPAV…TLAD), 173–245 (HLAK…AIVN), and 249–320 (NTPA…KICG). Thr-267 carries the phosphothreonine modification.

It belongs to the annexin family.

Its function is as follows. Inhibitor of phospholipase A2, also possesses anti-coagulant properties. Also cleaves the cyclic bond of inositol 1,2-cyclic phosphate to form inositol 1-phosphate. The polypeptide is Annexin A3 (ANXA3) (Homo sapiens (Human)).